Reading from the N-terminus, the 132-residue chain is Ig kappa chain V-III region MOPC 321 (132 aa).

Positions 1 to 20 (METDTLLLWVLLLWVPGSTG) are cleaved as a signal peptide. The segment at 21-43 (DIVLTQSPASLAVSLGQRATISC) is framework-1. Cys-43 and Cys-112 form a disulfide bridge. The segment at 44-58 (RASKSVNTYGNSFMZ) is complementarity-determining-1. The tract at residues 59 to 73 (WYZZKPGZPPKLLIY) is framework-2. Residues 74-80 (RASNLZS) form a complementarity-determining-2 region. Residues 81 to 112 (GIPARFSGSGSRTBFTLTIBPVZABDVATYFC) are framework-3. The segment at 113-121 (ZZSBZBPWT) is complementarity-determining-3. The tract at residues 122–131 (FGSGTKLEIK) is framework-4.

The sequence is that of Ig kappa chain V-III region MOPC 321 from Mus musculus (Mouse).